The chain runs to 191 residues: UPF0669 protein C6orf120 (191 aa).

A signal peptide spans 1–30; the sequence is MAAPRGRAAPWTTALLLLLASQVLSPGSCA. Residue asparagine 53 is glycosylated (N-linked (GlcNAc...) asparagine).

It belongs to the UPF0669 family. As to expression, mainly expressed in hepatocytes and some weak expression in germinal center cells of lymph nodes.

The protein resides in the secreted. May be involved in induction of apoptosis in CD4(+) T-cells, but not CD8(+) T-cells or hepatocytes. This is UPF0669 protein C6orf120 (C6orf120) from Homo sapiens (Human).